The following is a 278-amino-acid chain: Sulfur carrier protein FdhD (278 aa).

The active-site Cysteine persulfide intermediate is Cys-121. Residue Phe-260 to Arg-265 participates in Mo-bis(molybdopterin guanine dinucleotide) binding.

This sequence belongs to the FdhD family.

It localises to the cytoplasm. In terms of biological role, required for formate dehydrogenase (FDH) activity. Acts as a sulfur carrier protein that transfers sulfur from IscS to the molybdenum cofactor prior to its insertion into FDH. The protein is Sulfur carrier protein FdhD of Salmonella paratyphi A (strain ATCC 9150 / SARB42).